The chain runs to 216 residues: Cytosolic-abundant heat soluble protein 2 (216 aa).

The span at 1-11 (MSRDQGSTEYD) shows a compositional bias: polar residues. Disordered regions lie at residues 1-34 (MSRDQGSTEYDANQRQEQHQEQHNTSYTHTDVRT) and 66-91 (RISGQSSETHVQMTPEMEAEARKDRE). Residues 12–22 (ANQRQEQHQEQ) are compositionally biased toward basic and acidic residues. Composition is skewed to polar residues over residues 25–34 (TSYTHTDVRT) and 68–77 (SGQSSETHVQ). A coiled-coil region spans residues 81–180 (EMEAEARKDR…ARLATQALDQ (100 aa)). CAHS motif stretches follow at residues 115 to 133 (YRKQAEQEAERLRKELEKQ) and 152 to 170 (QKRQVELEAQLAKRELDRE).

The protein belongs to the Cytosolic-abundant heat soluble protein (CAHS) family.

It localises to the cytoplasm. Its function is as follows. CAHS proteins are cytosolic heat soluble proteins that seem to contribute to the anhydrobiosis in tardigrades, but their specific mechanisms are yet to be identified. It is possible that protection during anhydrobiosis might occur via the stabilization of vitrifying small molecules such as sugars, but not via the direct glass transition of CAHS proteins themselves. In Ramazzottius varieornatus (Water bear), this protein is Cytosolic-abundant heat soluble protein 2.